We begin with the raw amino-acid sequence, 377 residues long: Bacterial actin-related protein (377 aa).

It belongs to the actin family.

Functionally, may be a dominant-negative inhibitor of eukaryotic actin polymerization. The protein is Bacterial actin-related protein (barP) of Haliangium ochraceum (strain DSM 14365 / JCM 11303 / SMP-2).